Reading from the N-terminus, the 407-residue chain is Probable sodium/metabolite cotransporter BASS5, chloroplastic (407 aa).

The transit peptide at 1-57 directs the protein to the chloroplast; the sequence is MGVISPTETLFLKSQHRLLQPRNYSYALAFHSTRRVANFPRNSFSSLGSCSVDFPLR. Helical transmembrane passes span 101-121, 122-142, 162-184, 191-213, 222-242, 252-272, 286-306, 317-337, and 379-399; these read FIPHGILLSTILALVYPPSFT, WFKPRYFVPGLGFMMFAVGIN, YIGQYLIKPLLGYIFGVIAVSLF, GAGIMLVSCVSGAQLSNYTTFLT, IVMTSISTATAVLVTPMLSLL, VFGMISSILQVVITPIAAGLL, PFLPALTVIDMSCCIGAPLAL, ATILFLVITFHLLAFVAGYFF, and LVGVPPAISTVVMSLMGVSLV.

The protein belongs to the bile acid:sodium symporter (BASS) (TC 2.A.28) family. As to expression, widely expressed.

It is found in the membrane. The protein resides in the plastid. Its subcellular location is the chloroplast envelope. Plastidic transporter involved in the biosynthesis of aliphatic glucosinolates by translocating the biosynthetic intermediates of Met-derived glucosinolates across chloroplast membranes. Transports short chain (C2) alpha-keto acids, such as 4-methylsulfanyl-2-oxobutanoic acid, from the cytosol to the chloroplast where they are subjected to chain elongation cycles. Also functions in the transport of chain-elongated (C3 to C8) Met derivatives from the chloroplast to the cytosol. Does not seem to be involved in the transport of indole-derived glucosinolates. This chain is Probable sodium/metabolite cotransporter BASS5, chloroplastic (BASS5), found in Arabidopsis thaliana (Mouse-ear cress).